A 442-amino-acid chain; its full sequence is MRLSRYFLPILKENPKEAEIVSHRLMLRSGMIRQQSAGIYSWLPIGLKVLNKVCTIIREEQNRAGANEILMPTIQSADLWRESGRYDAYGKEMLRIQDRQEREMLFGPTNEEMVTDIFRSYVRSYKDLPLNLYHIQWKFRDEVRPRFGVMRSREFLMKDAYSFDLDYEGAKMAYYRMFVSYLRTFARVGLQAIPMRADTGPIGGDLSHEFIILAETGESQVYCDRAYLDLAVPGADTDFRNDAQLTDIVTRWTTPYAATDEMHDEADWAKVKPESQVSARGIEVGHIFHFGTKYSEPMGAKVQGPDGKEHLVSMGSYGIGPSRLVAAAIEASHDDAGIIWPKAIAPFGAGIVNMKPGDEGCDGVSEKLYEALTNAGVDPLLDDKDERPGAKFATMDLIGLPTQVIVGPRGVAAGEVEVKDRKTGERQSLGIEAAINMLTAQA.

Belongs to the class-II aminoacyl-tRNA synthetase family. ProS type 2 subfamily. Homodimer.

It is found in the cytoplasm. The enzyme catalyses tRNA(Pro) + L-proline + ATP = L-prolyl-tRNA(Pro) + AMP + diphosphate. Catalyzes the attachment of proline to tRNA(Pro) in a two-step reaction: proline is first activated by ATP to form Pro-AMP and then transferred to the acceptor end of tRNA(Pro). In Brucella suis (strain ATCC 23445 / NCTC 10510), this protein is Proline--tRNA ligase.